Consider the following 479-residue polypeptide: GTPase Der (479 aa).

EngA-type G domains lie at 3 to 166 (PVVA…AEEY) and 192 to 365 (LKLA…ASAT). Residues 9–16 (GRPNVGKS), 56–60 (DTGGI), 118–121 (NKID), 198–205 (GRPNVGKS), 245–249 (DTAGV), and 310–313 (NKWD) each bind GTP. The KH-like domain maps to 366 to 450 (QRISTSKLTK…PIKVEFREPV (85 aa)).

Belongs to the TRAFAC class TrmE-Era-EngA-EngB-Septin-like GTPase superfamily. EngA (Der) GTPase family. Associates with the 50S ribosomal subunit.

GTPase that plays an essential role in the late steps of ribosome biogenesis. The polypeptide is GTPase Der (Idiomarina loihiensis (strain ATCC BAA-735 / DSM 15497 / L2-TR)).